Here is a 508-residue protein sequence, read N- to C-terminus: Asparagine--tRNA ligase (508 aa).

The protein belongs to the class-II aminoacyl-tRNA synthetase family. In terms of assembly, homodimer.

It is found in the cytoplasm. The catalysed reaction is tRNA(Asn) + L-asparagine + ATP = L-asparaginyl-tRNA(Asn) + AMP + diphosphate + H(+). This is Asparagine--tRNA ligase from Streptococcus suis (strain 05ZYH33).